The sequence spans 403 residues: Argininosuccinate synthase (403 aa).

ATP contacts are provided by residues 12-20 (AYSGGLDTS) and Ala39. Residues Tyr90 and Ser95 each contribute to the L-citrulline site. Gly120 lines the ATP pocket. The L-aspartate site is built by Thr122, Asn126, and Asp127. Residue Asn126 coordinates L-citrulline. Positions 130, 182, 191, 267, and 279 each coordinate L-citrulline.

It belongs to the argininosuccinate synthase family. Type 1 subfamily. As to quaternary structure, homotetramer.

The protein localises to the cytoplasm. The enzyme catalyses L-citrulline + L-aspartate + ATP = 2-(N(omega)-L-arginino)succinate + AMP + diphosphate + H(+). Its pathway is amino-acid biosynthesis; L-arginine biosynthesis; L-arginine from L-ornithine and carbamoyl phosphate: step 2/3. This chain is Argininosuccinate synthase, found in Ruthia magnifica subsp. Calyptogena magnifica.